The following is a 266-amino-acid chain: Probable carboxylesterase Os04g0669500 (266 aa).

Active-site charge relay system residues include Ser-154, Asp-208, and His-240.

It belongs to the AB hydrolase superfamily. AB hydrolase 2 family.

Its function is as follows. Possesses carboxylesterase activity in vitro. This chain is Probable carboxylesterase Os04g0669500, found in Oryza sativa subsp. japonica (Rice).